The following is a 299-amino-acid chain: Taste receptor type 2 member 1 (299 aa).

Topologically, residues 1–9 are extracellular; it reads MLESHLIIY. The chain crosses the membrane as a helical span at residues 10–30; that stretch reads FLLAVIQFLLGIFTNGIIVVV. The Cytoplasmic portion of the chain corresponds to 31-55; the sequence is NGIDLIKHRKMAPLDLLLSCLAVSR. The helical transmembrane segment at 56–76 threads the bilayer; sequence IFLQLFIFYVNVIVIFFIEFI. The Extracellular portion of the chain corresponds to 77–81; it reads MCSAN. The helical transmembrane segment at 82–102 threads the bilayer; the sequence is CAILLFINELELWLATWLGVF. Residues 103-124 are Cytoplasmic-facing; the sequence is YCAKVASVRHPLFXWLKMRISK. A helical membrane pass occupies residues 125-145; the sequence is LVPWMILGSLLYVSMICVFHS. The Extracellular portion of the chain corresponds to 146–178; sequence KYAGFMVPYFLRNFFSQNTTIQKEDTLAIQIFS. N-linked (GlcNAc...) asparagine glycosylation occurs at N163. Residues 179–199 form a helical membrane-spanning segment; it reads FVAEFSVPLLIFLVAVLLLIF. The Cytoplasmic portion of the chain corresponds to 200–222; that stretch reads SLGRHTRQMRNTVAGSRVPGRGA. Residues 223 to 243 traverse the membrane as a helical segment; sequence PISALLSILSFLILYFSHCMI. Residues 244–257 lie on the Extracellular side of the membrane; that stretch reads KVFLSSLKFHIRRF. The chain crosses the membrane as a helical span at residues 258–278; sequence IFLFFILVIGIYPSGHSLILI. The Cytoplasmic portion of the chain corresponds to 279 to 299; the sequence is LGNPKLKQNAKKFLLHSKCCQ.

Belongs to the G-protein coupled receptor T2R family.

It localises to the membrane. Receptor that may play a role in the perception of bitterness and is gustducin-linked. May play a role in sensing the chemical composition of the gastrointestinal content. The activity of this receptor may stimulate alpha gustducin, mediate PLC-beta-2 activation and lead to the gating of TRPM5. The sequence is that of Taste receptor type 2 member 1 (TAS2R1) from Gorilla gorilla gorilla (Western lowland gorilla).